The sequence spans 275 residues: Large ribosomal subunit protein uL2c (275 aa).

Residues 28 to 53 are disordered; sequence TPTKSLTHANHRARGRNHSGSITTRW.

The protein belongs to the universal ribosomal protein uL2 family. In terms of assembly, part of the 50S ribosomal subunit.

Its subcellular location is the plastid. It localises to the chloroplast. In Nephroselmis olivacea (Green alga), this protein is Large ribosomal subunit protein uL2c (rpl2).